The sequence spans 472 residues: MAGGEAGVTLGQPHLSRQDLTTLDVTKLTPLSHEVISRQATINIGTIGHVAHGKSTVVKAISGVHTVRFKNELERNITIKLGYANAKIYKLDDPSCPRPECYRSCGSSTPDEFPTDIPGTKGNFKLVRHVSFVDCPGHDILMATMLNGAAVMDAALLLIAGNESCPQPQTSEHLAAIEIMKLKHILILQNKIDLVKESQAKEQYEQILAFVQGTVAEGAPIIPISAQLKYNIEVVCEYIVKKIPVPPRDFTSEPRLIVIRSFDVNKPGCEVDDLKGGVAGGSILKGVLKVGQEIEVRPGIVSKDSEGKLMCKPIFSKIVSLFAEHNDLQYAAPGGLIGVGTKIDPTLCRADRMVGQVLGAVGALPEIFTELEISYFLLRRLLGVRTEGDKKAAKVQKLSKNEVLMVNIGSLSTGGRVSAVKADLGKIVLTNPVCTEVGEKIALSRRVEKHWRLIGWGQIRRGVTIKPTVDDD.

Alanine 2 is subject to N-acetylalanine; partial. At serine 16 the chain carries Phosphoserine. Positions 39–248 constitute a tr-type G domain; the sequence is QATINIGTIG…IVKKIPVPPR (210 aa). The G1 stretch occupies residues 48–55; sequence GHVAHGKS. Residue 51-56 coordinates GTP; sequence AHGKST. The G2 stretch occupies residues 76–80; that stretch reads NITIK. Positions 134-137 are G3; it reads DCPG. Residues 190–193 and 225–227 contribute to the GTP site; these read NKID and SAQ. The interval 190–193 is G4; that stretch reads NKID. The interval 225–227 is G5; it reads SAQ. Residues 457–469 are interacts with CDC123; that stretch reads GQIRRGVTIKPTV.

The protein belongs to the TRAFAC class translation factor GTPase superfamily. Classic translation factor GTPase family. EIF2G subfamily. As to quaternary structure, eukaryotic translation initiation factor 2 eIF2 is a heterotrimeric complex composed of an alpha (EIF2S1), a beta (EIF2S2) and a gamma (EIF2S3) chain. eIF2 is member of the 43S pre-initiation complex (43S PIC). Interacts (via C-terminus) with CDC123; the interaction is direct. In terms of tissue distribution, expressed in testis, brain, liver and muscle.

It localises to the cytoplasm. The protein localises to the cytosol. It catalyses the reaction GTP + H2O = GDP + phosphate + H(+). Functionally, member of the eIF2 complex that functions in the early steps of protein synthesis by forming a ternary complex with GTP and initiator tRNA. This complex binds to a 40S ribosomal subunit, followed by mRNA binding to form the 43S pre-initiation complex (43S PIC). Junction of the 60S ribosomal subunit to form the 80S initiation complex is preceded by hydrolysis of the GTP bound to eIF2 and release of an eIF2-GDP binary complex. In order for eIF2 to recycle and catalyze another round of initiation, the GDP bound to eIF2 must exchange with GTP by way of a reaction catalyzed by eIF-2B. This chain is Eukaryotic translation initiation factor 2 subunit 3 (EIF2S3), found in Homo sapiens (Human).